The chain runs to 152 residues: Small ribosomal subunit protein uS8m (152 aa).

Belongs to the universal ribosomal protein uS8 family.

Its subcellular location is the mitochondrion. This Dictyostelium discoideum (Social amoeba) protein is Small ribosomal subunit protein uS8m (mrps8).